Reading from the N-terminus, the 467-residue chain is Serine/threonine-protein phosphatase 2A 56 kDa regulatory subunit epsilon isoform (467 aa).

Positions 1-40 (MSSAPTTPPSVDKVDGFSRKSVRKARQKRSQSSSQFRSQG) are disordered. Residue Ser-2 is modified to N-acetylserine. Phosphothreonine is present on Thr-7. Positions 20-29 (KSVRKARQKR) are enriched in basic residues. A phosphoserine mark is found at Ser-30, Ser-32, and Ser-34. Residues 30 to 40 (SQSSSQFRSQG) are compositionally biased toward low complexity.

It belongs to the phosphatase 2A regulatory subunit B56 family. As to quaternary structure, found in a complex with at least ARL2, PPP2CB; PPP2R1A, PPP2R2A, PPP2R5E and TBCD. PP2A consists of a common heterodimeric core enzyme, composed of a 36 kDa catalytic subunit (subunit C) and a 65 kDa constant regulatory subunit (PR65 or subunit A), that associates with a variety of regulatory subunits. Proteins that associate with the core dimer include three families of regulatory subunits B (the R2/B/PR55/B55, R3/B''/PR72/PR130/PR59 and R5/B'/B56 families), the 48 kDa variable regulatory subunit, viral proteins, and cell signaling molecules. Interacts with SGO1. In terms of processing, phosphorylated on serine residues.

It localises to the cytoplasm. In terms of biological role, the B regulatory subunit might modulate substrate selectivity and catalytic activity, and might also direct the localization of the catalytic enzyme to a particular subcellular compartment. This chain is Serine/threonine-protein phosphatase 2A 56 kDa regulatory subunit epsilon isoform (PPP2R5E), found in Homo sapiens (Human).